Consider the following 329-residue polypeptide: Serpentine receptor class alpha-4 (329 aa).

A run of 6 helical transmembrane segments spans residues Ile-25–Val-45, Leu-103–Leu-123, Gly-144–Trp-164, Tyr-188–Trp-208, Ile-238–Ile-258, and Leu-273–Phe-293.

The protein belongs to the nematode receptor-like protein sra family.

It localises to the membrane. In Caenorhabditis elegans, this protein is Serpentine receptor class alpha-4 (sra-4).